The primary structure comprises 137 residues: Acidic phospholipase A2 CC-PLA2-1 (137 aa).

The signal sequence occupies residues 1–16 (MRTLWIVAVWLMGVEG). 7 disulfides stabilise this stretch: C42-C130, C44-C60, C59-C110, C65-C137, C66-C103, C73-C96, and C90-C101. Residues Y43, G45, and G47 each coordinate Ca(2+). The active site involves H63. Position 64 (D64) interacts with Ca(2+). D104 is an active-site residue.

Belongs to the phospholipase A2 family. Group II subfamily. D49 sub-subfamily. Requires Ca(2+) as cofactor. Post-translationally, glycosylated (2.5%). Expressed by the venom gland.

The protein resides in the secreted. The catalysed reaction is a 1,2-diacyl-sn-glycero-3-phosphocholine + H2O = a 1-acyl-sn-glycero-3-phosphocholine + a fatty acid + H(+). Snake venom phospholipase A2 (PLA2) that inhibits blood coagulation and platelet aggregation induced by ADP and arachidonic acid. Inhibits tumor cell adhesion and migration in a dose-dependent manner. Abolishes the attachment of human brain microvascular endothelial cells (HBMEC) to fibrinogen (IC(50)=0.12 uM) and dramatically reduces its adhesion to fibronectin (IC(50)=0.12 uM), whereas no effect is observed on type I collagen, vitronectin or laminin 1. Also blocks the cell migration toward fibronectin and fibrinogen. These effects are not dependent of the catalytic activity, but are mediated by alpha-5/beta-1 (ITGA5/ITGB1) and alpha-v-containing (ITGAV) integrins. Also shows anti-angiogenic activity in chicken chorioallantoix membrane assay. Has a relatively high enzymatic activity. PLA2 catalyzes the calcium-dependent hydrolysis of the 2-acyl groups in 3-sn-phosphoglycerides. The sequence is that of Acidic phospholipase A2 CC-PLA2-1 from Cerastes cerastes (Horned desert viper).